Reading from the N-terminus, the 500-residue chain is Probable malate:quinone oxidoreductase (500 aa).

This sequence belongs to the MQO family. The cofactor is FAD.

The catalysed reaction is (S)-malate + a quinone = a quinol + oxaloacetate. The protein operates within carbohydrate metabolism; tricarboxylic acid cycle; oxaloacetate from (S)-malate (quinone route): step 1/1. In Bacillus cereus (strain B4264), this protein is Probable malate:quinone oxidoreductase.